The chain runs to 292 residues: Ribosomal RNA small subunit methyltransferase A (292 aa).

Residues asparagine 28, leucine 30, glycine 55, glutamate 76, aspartate 101, and asparagine 126 each contribute to the S-adenosyl-L-methionine site.

Belongs to the class I-like SAM-binding methyltransferase superfamily. rRNA adenine N(6)-methyltransferase family. RsmA subfamily.

It is found in the cytoplasm. It carries out the reaction adenosine(1518)/adenosine(1519) in 16S rRNA + 4 S-adenosyl-L-methionine = N(6)-dimethyladenosine(1518)/N(6)-dimethyladenosine(1519) in 16S rRNA + 4 S-adenosyl-L-homocysteine + 4 H(+). Functionally, specifically dimethylates two adjacent adenosines (A1518 and A1519) in the loop of a conserved hairpin near the 3'-end of 16S rRNA in the 30S particle. May play a critical role in biogenesis of 30S subunits. This Bacillus thuringiensis (strain Al Hakam) protein is Ribosomal RNA small subunit methyltransferase A.